The chain runs to 569 residues: Falcipain-1 (569 aa).

Over 1 to 35 (MVAIKEMKEFAFARPSLVETLNKKKKFLKKKEKRT) the chain is Cytoplasmic. Positions 1–332 (MVAIKEMKEF…KRNEKDIFSK (332 aa)) are cleaved as a propeptide — activation peptide. A helical; Signal-anchor for type II membrane protein transmembrane segment spans residues 36–56 (FVLSIYAFITFIIFCIGILYF). The Lumenal portion of the chain corresponds to 57–569 (TNKSSAHNNN…IGEEVFYPIL (513 aa)). 4 N-linked (GlcNAc...) asparagine glycosylation sites follow: asparagine 58, asparagine 98, asparagine 121, and asparagine 127. The disordered stretch occupies residues 97-118 (LNESSNEEDEEKYTLNSETYNN). Intrachain disulfides connect cysteine 354–cysteine 395, cysteine 388–cysteine 428, and cysteine 413–cysteine 433. The active site involves cysteine 357. Residues asparagine 479 and asparagine 487 are each glycosylated (N-linked (GlcNAc...) asparagine). Cysteine 482 and cysteine 558 are joined by a disulfide. Residues histidine 488 and asparagine 533 contribute to the active site.

The protein belongs to the peptidase C1 family. In terms of processing, contains disulfide bonds.

It localises to the membrane. The protein resides in the cytoplasmic granule. Functionally, cysteine protease. In the mosquito midgut, required for parasite development. The protein is Falcipain-1 of Plasmodium falciparum (isolate 3D7).